The chain runs to 96 residues: RxLR effector protein PITG_11507 (96 aa).

An N-terminal signal peptide occupies residues 1–19 (MRLSFIIVAVSLLAGGSGA). The disordered stretch occupies residues 27–59 (SDVLTSRGTNEGARTGKRSLRYDSNVERTGEED). Positions 44 to 59 (RSLRYDSNVERTGEED) match the RxLR-dEER motif. A compositionally biased stretch (basic and acidic residues) spans 46-55 (LRYDSNVERT).

The protein belongs to the RxLR effector family.

It localises to the secreted. Its subcellular location is the host nucleus. It is found in the host cytoplasm. In terms of biological role, effector that enhances P.infestans colonization of Nicotiana benthamiana leaves. The sequence is that of RxLR effector protein PITG_11507 from Phytophthora infestans (strain T30-4) (Potato late blight agent).